A 27-amino-acid polypeptide reads, in one-letter code: Defensin-like protein 1 (27 aa).

Position 1 is a pyrrolidone carboxylic acid (glutamine 1).

Belongs to the DEFL family. In terms of assembly, forms oligomers in its native state.

In terms of biological role, possesses antifungal activity sensitive to inorganic cations. This Brassica campestris (Field mustard) protein is Defensin-like protein 1.